Here is a 92-residue protein sequence, read N- to C-terminus: C-C motif chemokine 4 (92 aa).

The N-terminal stretch at 1–23 (MKLCVTVLSLLVLVAAFCSPALS) is a signal peptide. 2 disulfides stabilise this stretch: Cys-34/Cys-58 and Cys-35/Cys-74.

Belongs to the intercrine beta (chemokine CC) family. Homodimer. Interacts with CCR5.

The protein resides in the secreted. Monokine with inflammatory and chemokinetic properties. The polypeptide is C-C motif chemokine 4 (CCL4) (Canis lupus familiaris (Dog)).